The sequence spans 96 residues: Large ribosomal subunit protein bL27 (96 aa).

Positions 1 to 9 are excised as a propeptide; sequence MLRLDLQFF. The disordered stretch occupies residues 14 to 36; it reads GVGSTKNGRDSQSKRLGAKRADG.

It belongs to the bacterial ribosomal protein bL27 family. In terms of processing, the N-terminus is cleaved by ribosomal processing cysteine protease Prp.

The chain is Large ribosomal subunit protein bL27 from Bacillus anthracis (strain A0248).